Consider the following 128-residue polypeptide: LIM domain-containing protein 2 (128 aa).

Residue M1 is modified to N-acetylmethionine. Residues 1–25 (MFQAAGAAQATPSHEAKGSSGNSTV) are disordered. Positions 39–99 (ETCAACQKTV…KPHFQQLFKS (61 aa)) constitute an LIM zinc-binding domain. Positions 41, 44, 62, 65, 68, 71, 89, and 92 each coordinate Zn(2+).

In terms of assembly, interacts with ILK.

Its subcellular location is the cytoplasm. It is found in the nucleus. Its function is as follows. Acts as an activator of the protein-kinase ILK, thereby regulating cell motility. This chain is LIM domain-containing protein 2 (Limd2), found in Rattus norvegicus (Rat).